Consider the following 520-residue polypeptide: Cyclic AMP-responsive element-binding protein 3-like protein 2 (520 aa).

Topologically, residues 1–379 (MEVLESGEQG…KLAGTQTGTC (379 aa)) are cytoplasmic. Residue S93 is modified to Phosphoserine. A Glycyl lysine isopeptide (Lys-Gly) (interchain with G-Cter in SUMO2) cross-link involves residue K178. A Phosphoserine modification is found at S191. A disordered region spans residues 195 to 264 (APVDHLHLPP…PHKLQGSGPL (70 aa)). Composition is skewed to low complexity over residues 208–220 (SSHG…SLSP) and 234–255 (SPSR…LTAP). A bZIP domain is found at 294–357 (ALKKIRRKIK…RTLLQQLQKL (64 aa)). A basic motif region spans residues 296–325 (KKIRRKIKNKISAQESRRKKKEYMDSLEKK). The segment at 336–357 (LRKKVEVLENTNRTLLQQLQKL) is leucine-zipper. The helical; Signal-anchor for type II membrane protein transmembrane segment at 380–400 (LMVVVLCFAVAFGSFFQGYGP) threads the bilayer. Topologically, residues 401 to 520 (YPSATKMALP…ELDRRVNTTF (120 aa)) are lumenal. The S1P recognition motif lies at 427–430 (RNLL). 3 N-linked (GlcNAc...) asparagine glycosylation sites follow: N480, N504, and N517.

Belongs to the bZIP family. ATF subfamily. As to quaternary structure, binds DNA as a dimer. In terms of processing, upon ER stress, translocated to the Golgi apparatus, where it is processed by regulated intramembrane proteolysis (RIP) to release the cytosol-facing N-terminal transcription factor domain. The cleavage is performed sequentially by site-1 and site-2 proteases (S1P/MBTPS1 and S2P/MBTPS2). N-glycosylated. Post-translationally, ubiquitinated by HRD1/SYVN1; undergoes 'Lys-48'-linked ubiquitination, followed by rapid proteasomal degradation under normal conditions. Upon ER stress, SYVN1 E3 ubiquitin-protein ligase dissociates from its substrate, ubiquitination does not occur and CREB3L2 is stabilized. As to expression, widely expressed with highest levels in placenta, lung, spleen and intestine, and lowest levels in heart, brain, skeletal muscle, thymus, colon and leukocytes. In fetal tissues, the weakest expression is detected in brain and heart.

The protein localises to the endoplasmic reticulum membrane. It is found in the nucleus. Transcription factor involved in unfolded protein response (UPR). In the absence of endoplasmic reticulum (ER) stress, inserted into ER membranes, with N-terminal DNA-binding and transcription activation domains oriented toward the cytosolic face of the membrane. In response to ER stress, transported to the Golgi, where it is cleaved in a site-specific manner by resident proteases S1P/MBTPS1 and S2P/MBTPS2. The released N-terminal cytosolic domain is translocated to the nucleus to effect transcription of specific target genes. Plays a critical role in chondrogenesis by activating the transcription of SEC23A, which promotes the transport and secretion of cartilage matrix proteins, and possibly that of ER biogenesis-related genes. In a neuroblastoma cell line, protects cells from ER stress-induced death. In vitro activates transcription of target genes via direct binding to the CRE site. In Homo sapiens (Human), this protein is Cyclic AMP-responsive element-binding protein 3-like protein 2 (CREB3L2).